The primary structure comprises 415 residues: Carboxypeptidase G2 (415 aa).

The signal sequence occupies residues 1 to 22 (MRPSIHRTAIAAVLATAFVAGT). Histidine 112 is a binding site for Zn(2+). The active site involves aspartate 114. Aspartate 141 lines the Zn(2+) pocket. Residue glutamate 175 is the Proton acceptor of the active site. Zn(2+) is bound by residues glutamate 176, glutamate 200, and histidine 385.

Belongs to the peptidase M20A family. As to quaternary structure, homodimer. It depends on Zn(2+) as a cofactor.

It catalyses the reaction Release of C-terminal glutamate residues from a wide range of N-acylating moieties, including peptidyl, aminoacyl, benzoyl, benzyloxycarbonyl, folyl and pteroyl groups.. Functionally, catalyzes the hydrolysis of reduced and non-reduced folates to pteroates and L-glutamate. This enzyme has a broad specificity. The chain is Carboxypeptidase G2 (cpg2) from Pseudomonas sp. (strain RS-16).